Here is a 249-residue protein sequence, read N- to C-terminus: 5-oxoprolinase subunit A (249 aa).

This sequence belongs to the LamB/PxpA family. As to quaternary structure, forms a complex composed of PxpA, PxpB and PxpC.

The enzyme catalyses 5-oxo-L-proline + ATP + 2 H2O = L-glutamate + ADP + phosphate + H(+). Functionally, catalyzes the cleavage of 5-oxoproline to form L-glutamate coupled to the hydrolysis of ATP to ADP and inorganic phosphate. In Limosilactobacillus fermentum (strain NBRC 3956 / LMG 18251) (Lactobacillus fermentum), this protein is 5-oxoprolinase subunit A.